Reading from the N-terminus, the 280-residue chain is Lipase chaperone (280 aa).

A helical transmembrane segment spans residues 5-22 (ALTIITIASGSLGAVYFL).

The protein belongs to the lipase chaperone family.

It localises to the cell inner membrane. In terms of biological role, may be involved in the folding of the extracellular lipase during its passage through the periplasm. The protein is Lipase chaperone (lifO) of Vibrio vulnificus (strain YJ016).